The chain runs to 78 residues: MKLTCVVIVAVLLLTACQLLTADDSRGTQKHRSLRSTTKVSKATDCIEAGNYCGPTVMKICCGFCSPFSKICMNYPQN.

The signal sequence occupies residues 1–22 (MKLTCVVIVAVLLLTACQLLTA). The propeptide occupies 23 to 42 (DDSRGTQKHRSLRSTTKVSK). Intrachain disulfides connect cysteine 46–cysteine 62, cysteine 53–cysteine 65, and cysteine 61–cysteine 72. 2 positions are modified to 4-hydroxyproline: proline 55 and proline 67.

It belongs to the conotoxin O1 superfamily. Expressed by the venom duct.

Its subcellular location is the secreted. Functionally, omega-conotoxins act at presynaptic membranes, they bind and block voltage-gated calcium channels (Cav). This Conus achatinus (Little frog cone) protein is Omega-conotoxin-like Ac6.5.